The sequence spans 425 residues: Serine--tRNA ligase (425 aa).

L-serine is bound at residue 230–232; the sequence is TAE. 261-263 contacts ATP; sequence RSE. Residue Glu284 participates in L-serine binding. 348-351 contacts ATP; the sequence is EISS. Ser384 serves as a coordination point for L-serine.

The protein belongs to the class-II aminoacyl-tRNA synthetase family. Type-1 seryl-tRNA synthetase subfamily. In terms of assembly, homodimer. The tRNA molecule binds across the dimer.

Its subcellular location is the cytoplasm. The enzyme catalyses tRNA(Ser) + L-serine + ATP = L-seryl-tRNA(Ser) + AMP + diphosphate + H(+). It carries out the reaction tRNA(Sec) + L-serine + ATP = L-seryl-tRNA(Sec) + AMP + diphosphate + H(+). Its pathway is aminoacyl-tRNA biosynthesis; selenocysteinyl-tRNA(Sec) biosynthesis; L-seryl-tRNA(Sec) from L-serine and tRNA(Sec): step 1/1. Its function is as follows. Catalyzes the attachment of serine to tRNA(Ser). Is also able to aminoacylate tRNA(Sec) with serine, to form the misacylated tRNA L-seryl-tRNA(Sec), which will be further converted into selenocysteinyl-tRNA(Sec). In Streptococcus pyogenes serotype M2 (strain MGAS10270), this protein is Serine--tRNA ligase.